The primary structure comprises 232 residues: Pyridoxine 5'-phosphate synthase (232 aa).

Asparagine 7 contributes to the 3-amino-2-oxopropyl phosphate binding site. Position 9–10 (9–10 (DH)) interacts with 1-deoxy-D-xylulose 5-phosphate. Residue arginine 18 participates in 3-amino-2-oxopropyl phosphate binding. Residue histidine 43 is the Proton acceptor of the active site. The 1-deoxy-D-xylulose 5-phosphate site is built by arginine 45 and histidine 50. Glutamate 69 acts as the Proton acceptor in catalysis. Position 99 (threonine 99) interacts with 1-deoxy-D-xylulose 5-phosphate. Histidine 185 functions as the Proton donor in the catalytic mechanism. Residues glycine 186 and 207 to 208 (GH) each bind 3-amino-2-oxopropyl phosphate.

The protein belongs to the PNP synthase family. In terms of assembly, homooctamer; tetramer of dimers.

It localises to the cytoplasm. It carries out the reaction 3-amino-2-oxopropyl phosphate + 1-deoxy-D-xylulose 5-phosphate = pyridoxine 5'-phosphate + phosphate + 2 H2O + H(+). The protein operates within cofactor biosynthesis; pyridoxine 5'-phosphate biosynthesis; pyridoxine 5'-phosphate from D-erythrose 4-phosphate: step 5/5. Catalyzes the complicated ring closure reaction between the two acyclic compounds 1-deoxy-D-xylulose-5-phosphate (DXP) and 3-amino-2-oxopropyl phosphate (1-amino-acetone-3-phosphate or AAP) to form pyridoxine 5'-phosphate (PNP) and inorganic phosphate. In Gluconobacter oxydans (strain 621H) (Gluconobacter suboxydans), this protein is Pyridoxine 5'-phosphate synthase.